A 183-amino-acid chain; its full sequence is Ribosome maturation factor RimM (183 aa).

Positions 104–183 (EGDYYWKDLI…TIEVDWDPGF (80 aa)) constitute a PRC barrel domain.

The protein belongs to the RimM family. As to quaternary structure, binds ribosomal protein uS19.

The protein localises to the cytoplasm. Functionally, an accessory protein needed during the final step in the assembly of 30S ribosomal subunit, possibly for assembly of the head region. Essential for efficient processing of 16S rRNA. May be needed both before and after RbfA during the maturation of 16S rRNA. It has affinity for free ribosomal 30S subunits but not for 70S ribosomes. This chain is Ribosome maturation factor RimM, found in Cronobacter sakazakii (strain ATCC BAA-894) (Enterobacter sakazakii).